The primary structure comprises 134 residues: Transcription antitermination protein NusB (134 aa).

Belongs to the NusB family.

Functionally, involved in transcription antitermination. Required for transcription of ribosomal RNA (rRNA) genes. Binds specifically to the boxA antiterminator sequence of the ribosomal RNA (rrn) operons. This is Transcription antitermination protein NusB from Shewanella baltica (strain OS223).